Reading from the N-terminus, the 511-residue chain is Maturase K (511 aa).

It belongs to the intron maturase 2 family. MatK subfamily.

The protein localises to the plastid. It is found in the chloroplast. Functionally, usually encoded in the trnK tRNA gene intron. Probably assists in splicing its own and other chloroplast group II introns. The chain is Maturase K from Hordeum jubatum (Foxtail barley).